Reading from the N-terminus, the 315-residue chain is Mannose-6-phosphate isomerase ManA (315 aa).

H97, E115, and H172 together coordinate Zn(2+). Residue R192 is part of the active site.

The protein belongs to the mannose-6-phosphate isomerase type 1 family. Zn(2+) serves as cofactor.

It catalyses the reaction D-mannose 6-phosphate = D-fructose 6-phosphate. This chain is Mannose-6-phosphate isomerase ManA (manA), found in Bacillus subtilis (strain 168).